A 148-amino-acid polypeptide reads, in one-letter code: UPF0756 membrane protein NGK_2061 (148 aa).

A run of 4 helical transmembrane segments spans residues 10–32 (LVTL…ATIL), 50–70 (HGLN…LVSG), 85–105 (MISA…GVPL), and 116–136 (LLIG…GPLI).

It belongs to the UPF0756 family.

The protein localises to the cell membrane. The polypeptide is UPF0756 membrane protein NGK_2061 (Neisseria gonorrhoeae (strain NCCP11945)).